We begin with the raw amino-acid sequence, 150 residues long: CASP-like protein 2 (150 aa).

Residues 1 to 17 (MKPEAGDGRSGWRWVAT) are Cytoplasmic-facing. Residues 18 to 38 (FDLILRLAAIVATSTAVLAAM) form a helical membrane-spanning segment. Residues 39-41 (GKT) lie on the Extracellular side of the membrane. Residues 42–62 (FVVVVNGVACFYLLMSLPVSI) form a helical membrane-spanning segment. Residues 63-82 (FNIMRPGACPANRAVLTALD) are Cytoplasmic-facing. Residues 83–103 (MVTVALVTAGALVAGILYLVH) form a helical membrane-spanning segment. At 104-121 (KAGDTHADWFSIWSQLDS) the chain is on the extracellular side. Residues 122–142 (LSYLAVLALILHVLLSGSILY) form a helical membrane-spanning segment. Residues 143 to 150 (KQALNIMF) are Cytoplasmic-facing.

It belongs to the Casparian strip membrane proteins (CASP) family. Homodimer and heterodimers.

It is found in the cell membrane. This chain is CASP-like protein 2, found in Picea sitchensis (Sitka spruce).